Reading from the N-terminus, the 132-residue chain is Small ribosomal subunit protein uS8 (132 aa).

This sequence belongs to the universal ribosomal protein uS8 family. Part of the 30S ribosomal subunit. Contacts proteins S5 and S12.

Functionally, one of the primary rRNA binding proteins, it binds directly to 16S rRNA central domain where it helps coordinate assembly of the platform of the 30S subunit. The sequence is that of Small ribosomal subunit protein uS8 from Lactobacillus delbrueckii subsp. bulgaricus (strain ATCC BAA-365 / Lb-18).